The following is a 167-amino-acid chain: MKLILRADVENLGRLGDVVTVKPGFGRNFLLPQGLAMLASDANLKAFELERKKLQAKMDALRTAASDLSAKIAATELVIPVRVGENDKLYGSVTTAIIGDALAEKGVDIDRRRILLDAAIRTLGTHEVRVRLHADVVATLNVKVVAEDKVSDAAEPVVEAEPETPAE.

It belongs to the bacterial ribosomal protein bL9 family.

In terms of biological role, binds to the 23S rRNA. The sequence is that of Large ribosomal subunit protein bL9 from Nitratidesulfovibrio vulgaris (strain DSM 19637 / Miyazaki F) (Desulfovibrio vulgaris).